Reading from the N-terminus, the 342-residue chain is Deoxyguanosinetriphosphate triphosphohydrolase-like protein (342 aa).

Positions 75–190 (RLVHTLEVSQ…VRFADKIAYV (116 aa)) constitute an HD domain.

This sequence belongs to the dGTPase family. Type 2 subfamily.

The sequence is that of Deoxyguanosinetriphosphate triphosphohydrolase-like protein from Clostridium perfringens (strain SM101 / Type A).